The primary structure comprises 73 residues: Alpha-bungarotoxin N3 (73 aa).

5 disulfides stabilise this stretch: Cys-3–Cys-23, Cys-16–Cys-43, Cys-28–Cys-32, Cys-47–Cys-58, and Cys-59–Cys-64.

Belongs to the three-finger toxin family. Long-chain subfamily. Type II alpha-neurotoxin sub-subfamily. As to quaternary structure, monomer in solution, homodimer in crystal state. Expressed by the venom gland.

It localises to the secreted. Binds with high affinity to muscular (alpha-1/CHRNA1) and neuronal (alpha-7/CHRNA7) nicotinic acetylcholine receptor (nAChR) and inhibits acetylcholine from binding to the receptor, thereby impairing neuromuscular and neuronal transmission. Mice injected with this toxin develop flaccid paralysis followed by death. Irreversibly inhibits twitches in a concentration-dependent manner in rat phrenic nerve-hemidiaphragm and chick biventer cervicis muscle. This Bungarus candidus (Malayan krait) protein is Alpha-bungarotoxin N3.